The chain runs to 259 residues: Probable metal transport system ATP-binding protein CPn_0348/CP_0412/CPj0348/CpB0355 (259 aa).

One can recognise an ABC transporter domain in the interval 3–241; it reads VKDETFWSVH…TIFQTYGCEI (239 aa). 41-48 serves as a coordination point for ATP; it reads GPNGAGKS.

Belongs to the ABC transporter superfamily.

The protein localises to the cell inner membrane. Functionally, part of an ATP-driven transport system CPn0346/CPn0347/CPn0348/CPn0349 for a metal. Probably responsible for energy coupling to the transport system. This chain is Probable metal transport system ATP-binding protein CPn_0348/CP_0412/CPj0348/CpB0355, found in Chlamydia pneumoniae (Chlamydophila pneumoniae).